A 163-amino-acid chain; its full sequence is MADEEKLPPGWEKRMSRSSGRVYYFNHITNASQWERPSGNSSGSGKNGQGEPTRVRCSHLLVKHSQSRRPSSWRQEKITRTKEEALELINGYIQKIKSGEEDFESLASQFSDCSSAKARGDLGAFSRGQMQKPFEDASFALRTGEMSGPVFTDSGIHIILRTE.

The WW domain maps to Glu-5–Gly-39. Residues Gln-33 to Arg-54 form a disordered region. Lys-46 is subject to N6-acetyllysine. The PpiC domain occupies Pro-52–Glu-163. Ser-71 carries the post-translational modification Phosphoserine; by DAPK1. Residue Ser-108 is modified to Phosphoserine.

Interacts with STIL. Interacts with KIF20B. Interacts with NEK6. Interacts (via WW domain) with PRKX. Interacts with BTK. Interacts (via PpiC domain) with DAPK1. Interacts with the phosphorylated form of RAF1. Interacts (via WW domain) with ATCAY; upon NGF stimulation. Interacts with PML (isoform PML-4). Interacts with BCL6. Interacts with FBXW7, disrupting FBXW7 dimerization and promoting FBXW7 autoubiquitination and degradation. Directly interacts with RBBP8/CtIP; this interaction depends upon RBBP8 phosphorylation. Interacts (via WW domain) with IRAK3/IRAK-M in response to IL33-mediated (but not TLR4 ligand LPS) dendritic cell stimulation. Interacts with PGK1 (when phosphorylated at 'Ser-203'); the interaction is direct, occurs under hypoxic conditions, and targets PGK1 to the mitochondrion by promoting interactions with the TOM complex. In terms of processing, phosphorylation at Ser-71 by DAPK1 results in inhibition of its catalytic activity, nuclear localization, and its ability to induce centrosome amplification, chromosome instability and cell transformation. Ser-71 is dephosphorylated upon IL33-stimulation of dendritic cells.

The protein localises to the nucleus. It localises to the nucleus speckle. The protein resides in the cytoplasm. The catalysed reaction is [protein]-peptidylproline (omega=180) = [protein]-peptidylproline (omega=0). Functionally, peptidyl-prolyl cis/trans isomerase (PPIase) that binds to and isomerizes specific phosphorylated Ser/Thr-Pro (pSer/Thr-Pro) motifs. By inducing conformational changes in a subset of phosphorylated proteins, acts as a molecular switch in multiple cellular processes. Displays a preference for acidic residues located N-terminally to the proline bond to be isomerized. Regulates mitosis presumably by interacting with NIMA and attenuating its mitosis-promoting activity. Down-regulates kinase activity of BTK. Can transactivate multiple oncogenes and induce centrosome amplification, chromosome instability and cell transformation. Required for the efficient dephosphorylation and recycling of RAF1 after mitogen activation. Binds and targets PML and BCL6 for degradation in a phosphorylation-dependent manner. Acts as a regulator of JNK cascade by binding to phosphorylated FBXW7, disrupting FBXW7 dimerization and promoting FBXW7 autoubiquitination and degradation: degradation of FBXW7 leads to subsequent stabilization of JUN. May facilitate the ubiquitination and proteasomal degradation of RBBP8/CtIP through CUL3/KLHL15 E3 ubiquitin-protein ligase complex, hence favors DNA double-strand repair through error-prone non-homologous end joining (NHEJ) over error-free, RBBP8-mediated homologous recombination (HR). Upon IL33-induced lung inflammation, catalyzes cis-trans isomerization of phosphorylated IRAK3/IRAK-M, inducing IRAK3 stabilization, nuclear translocation and expression of pro-inflammatory genes in dendritic cells. Catalyzes cis-trans isomerization of phosphorylated phosphoglycerate kinase PGK1 under hypoxic conditions to promote its binding to the TOM complex and targeting to the mitochondrion. In Bos taurus (Bovine), this protein is Peptidyl-prolyl cis-trans isomerase NIMA-interacting 1 (PIN1).